Consider the following 188-residue polypeptide: Nicotinamide/nicotinic acid mononucleotide adenylyltransferase (188 aa).

Belongs to the archaeal NMN adenylyltransferase family.

It catalyses the reaction beta-nicotinamide D-ribonucleotide + ATP + H(+) = diphosphate + NAD(+). The catalysed reaction is nicotinate beta-D-ribonucleotide + ATP + H(+) = deamido-NAD(+) + diphosphate. It functions in the pathway cofactor biosynthesis; NAD(+) biosynthesis; NAD(+) from nicotinamide D-ribonucleotide: step 1/1. The protein operates within cofactor biosynthesis; NAD(+) biosynthesis; deamido-NAD(+) from nicotinate D-ribonucleotide: step 1/1. Its function is as follows. Dual substrate specificity enzyme that catalyzes the formation of NAD(+) from nicotinamide mononucleotide (NMN) and the formation of deamido-NAD(+) (NaAD) from nicotinate mononucleotide (NaMN). Shows nearly identical catalytic efficiency for both physiological substrates. Plays an essential role in all three routes of NAD biogenesis, de novo synthesis as well as the deamidating and nondeamidating salvage pathways. The polypeptide is Nicotinamide/nicotinic acid mononucleotide adenylyltransferase (Acinetobacter baylyi (strain ATCC 33305 / BD413 / ADP1)).